The primary structure comprises 114 residues: Dihydroneopterin monophosphate aldolase (114 aa).

Zn(2+) contacts are provided by histidine 15, histidine 26, and histidine 28.

This sequence belongs to the PTPS family. The cofactor is Zn(2+).

The enzyme catalyses 7,8-dihydroneopterin 3'-phosphate = glycolaldehyde phosphate + 6-hydroxymethyl-7,8-dihydropterin. Catalyzes the conversion of 7,8-dihydroneopterin monophosphate (H2NMP) to 6-hydroxymethyl-7,8-dihydropterin (6-HMD). Cannot use 7,8-dihydroneopterin (H2Neo) or 7,8-dihydroneopterin triphosphate (H2NTP) as substrate. In Pyrococcus furiosus (strain ATCC 43587 / DSM 3638 / JCM 8422 / Vc1), this protein is Dihydroneopterin monophosphate aldolase.